A 399-amino-acid chain; its full sequence is Putative gustatory receptor 59e (399 aa).

Topologically, residues 1 to 33 (MDSSYWENLLLTINRFLGVYPSGRVGVLRWLHT) are cytoplasmic. A helical membrane pass occupies residues 34-54 (LWSLFLLMYIWTGSIVKCLEF). The Extracellular segment spans residues 55–65 (TVEIPTIEKLL). Residues 66 to 86 (YLMEFPGNMATIAILVYYAVL) traverse the membrane as a helical segment. The Cytoplasmic portion of the chain corresponds to 87-120 (NRPLAHGAELQIERIITGLKGKAKRLVYKRHGQR). A helical transmembrane segment spans residues 121–141 (TLHLMATTLVFHGLCVLVDVV). The Extracellular portion of the chain corresponds to 142-206 (NYDFEFWTTW…RPPQGSTKLD (65 aa)). A helical membrane pass occupies residues 207–227 (ACYESAFAVLVDAGGGSALMI). The Cytoplasmic portion of the chain corresponds to 228 to 250 (EEMRYTCNLIEQVHSQFLLRFGL). The chain crosses the membrane as a helical span at residues 251–271 (YLVLNLLNSLVSICVELYLIF). The Extracellular segment spans residues 272–282 (NFFETPLWEES). The helical transmembrane segment at 283 to 303 (VLLVYRLLWLAMHGGRIWFIL) threads the bilayer. Topologically, residues 304–361 (SVNEQILEQKCNLCQLLNELEVCSSRLQRTINRFLLQLQRSIDQPLEACGIVTLDTRS) are cytoplasmic. A helical transmembrane segment spans residues 362–382 (LGGFIGVLMAIVIFLIQIGLG). Residues N383 and N392 are each glycosylated (N-linked (GlcNAc...) asparagine). The Extracellular segment spans residues 383–399 (NKSLMGVALNRSNWVYV).

It belongs to the insect chemoreceptor superfamily. Gustatory receptor (GR) family. Gr10a subfamily. In terms of tissue distribution, expressed in the adult labellar chemosensory neurons. In larvae, is expressed in neurons of the terminal external chemosensory organ.

It is found in the cell membrane. Functionally, probable gustatory receptor which mediates acceptance or avoidance behavior, depending on its substrates. The sequence is that of Putative gustatory receptor 59e (Gr59e) from Drosophila melanogaster (Fruit fly).